Consider the following 104-residue polypeptide: Glycine-rich protein (104 aa).

Residues Met1–Ala18 form the signal peptide.

The protein belongs to the non-disulfide-bridged peptide (NDBP) superfamily. As to expression, expressed by the venom gland.

It is found in the secreted. The polypeptide is Glycine-rich protein (Lychas mucronatus (Chinese swimming scorpion)).